A 367-amino-acid chain; its full sequence is Peptide chain release factor 2 (367 aa).

An N5-methylglutamine modification is found at Gln-254.

Belongs to the prokaryotic/mitochondrial release factor family. Methylated by PrmC. Methylation increases the termination efficiency of RF2.

It is found in the cytoplasm. In terms of biological role, peptide chain release factor 2 directs the termination of translation in response to the peptide chain termination codons UGA and UAA. This chain is Peptide chain release factor 2, found in Acidovorax ebreus (strain TPSY) (Diaphorobacter sp. (strain TPSY)).